The primary structure comprises 377 residues: MSKRDYYEVLGVGRDASEREIKKAYKRLAMKFHPDRNPGDKAAEASFKEVKEAYEILTDANKKAAYDQFGHAGVDPNRGGGGGYGGAGDFGDIFGDVFGDIFGGGRRGGQRQAARGSDLRYNLELSLEEAVKGLTKELRIPTLASCDVCDGSGAKKGSSATTCGTCHGQGQVQMRQGFFTVQQPCPTCHGRGKIIKDPCSKCHGDGRVEKTKTLSVKIPAGVDTGDRIRLAGEGEAGEFGAPPGDLYVQVTVREHAIFVRDGNNLYCEVPISFSKAALGGEIEVPTLDGKVSLKIPAETQTGRMFRLRGKGVKSVRSHAVGDLLCKVVMETPVNLNERQKELLREFEATLTGESKKHSPKAEGFFDGVKKFFQDLNS.

The region spanning 5–70 is the J domain; that stretch reads DYYEVLGVGR…NKKAAYDQFG (66 aa). Residues 133–211 form a CR-type zinc finger; sequence GLTKELRIPT…CHGDGRVEKT (79 aa). Residues C146, C149, C163, C166, C185, C188, C199, and C202 each coordinate Zn(2+). CXXCXGXG motif repeat units follow at residues 146–153, 163–170, 185–192, and 199–206; these read CDVCDGSG, CGTCHGQG, CPTCHGRG, and CSKCHGDG.

This sequence belongs to the DnaJ family. In terms of assembly, homodimer. The cofactor is Zn(2+).

It is found in the cytoplasm. In terms of biological role, participates actively in the response to hyperosmotic and heat shock by preventing the aggregation of stress-denatured proteins and by disaggregating proteins, also in an autonomous, DnaK-independent fashion. Unfolded proteins bind initially to DnaJ; upon interaction with the DnaJ-bound protein, DnaK hydrolyzes its bound ATP, resulting in the formation of a stable complex. GrpE releases ADP from DnaK; ATP binding to DnaK triggers the release of the substrate protein, thus completing the reaction cycle. Several rounds of ATP-dependent interactions between DnaJ, DnaK and GrpE are required for fully efficient folding. Also involved, together with DnaK and GrpE, in the DNA replication of plasmids through activation of initiation proteins. This is Chaperone protein DnaJ from Shewanella sp. (strain ANA-3).